The primary structure comprises 307 residues: Methionyl-tRNA formyltransferase (307 aa).

Residue 108–111 (SLLP) participates in (6S)-5,6,7,8-tetrahydrofolate binding.

The protein belongs to the Fmt family.

The catalysed reaction is L-methionyl-tRNA(fMet) + (6R)-10-formyltetrahydrofolate = N-formyl-L-methionyl-tRNA(fMet) + (6S)-5,6,7,8-tetrahydrofolate + H(+). Attaches a formyl group to the free amino group of methionyl-tRNA(fMet). The formyl group appears to play a dual role in the initiator identity of N-formylmethionyl-tRNA by promoting its recognition by IF2 and preventing the misappropriation of this tRNA by the elongation apparatus. This is Methionyl-tRNA formyltransferase from Xanthomonas euvesicatoria pv. vesicatoria (strain 85-10) (Xanthomonas campestris pv. vesicatoria).